Here is a 452-residue protein sequence, read N- to C-terminus: UPF0761 membrane protein Bpet3042 (452 aa).

Transmembrane regions (helical) follow at residues 56 to 76, 114 to 134, 153 to 173, 195 to 215, 225 to 245, and 259 to 279; these read VLGI…FPVF, LTAI…MTID, ALVY…SLWA, AISF…FVVV, ALVG…AFAY, and AFAT…AVLF.

The protein belongs to the UPF0761 family.

It is found in the cell inner membrane. The polypeptide is UPF0761 membrane protein Bpet3042 (Bordetella petrii (strain ATCC BAA-461 / DSM 12804 / CCUG 43448)).